The following is a 315-amino-acid chain: Prephenate dehydratase (315 aa).

One can recognise a Prephenate dehydratase domain in the interval 3–190 (RIAYLGPQGT…ARTRFVLVGR (188 aa)). The 78-residue stretch at 204–281 (SVALRLPNTP…EDVRYLGSWP (78 aa)) folds into the ACT domain.

As to quaternary structure, homodimer.

It catalyses the reaction prephenate + H(+) = 3-phenylpyruvate + CO2 + H2O. It functions in the pathway amino-acid biosynthesis; L-phenylalanine biosynthesis; phenylpyruvate from prephenate: step 1/1. The sequence is that of Prephenate dehydratase (pheA) from Mycobacterium sp. (strain KMS).